We begin with the raw amino-acid sequence, 186 residues long: Putative 3-methyladenine DNA glycosylase (186 aa).

It belongs to the DNA glycosylase MPG family.

The chain is Putative 3-methyladenine DNA glycosylase from Borrelia garinii subsp. bavariensis (strain ATCC BAA-2496 / DSM 23469 / PBi) (Borreliella bavariensis).